The sequence spans 325 residues: Elongation factor P--(R)-beta-lysine ligase (325 aa).

Substrate is bound at residue 76 to 78; sequence SPE. Residues 100 to 102 and Asn109 each bind ATP; that span reads RNE. Tyr118 serves as a coordination point for substrate. Residue 244 to 245 coordinates ATP; sequence EL. Residue Glu251 participates in substrate binding. Gly300 contacts ATP.

It belongs to the class-II aminoacyl-tRNA synthetase family. EpmA subfamily. Homodimer.

It catalyses the reaction D-beta-lysine + L-lysyl-[protein] + ATP = N(6)-((3R)-3,6-diaminohexanoyl)-L-lysyl-[protein] + AMP + diphosphate + H(+). Its function is as follows. With EpmB is involved in the beta-lysylation step of the post-translational modification of translation elongation factor P (EF-P) on 'Lys-34'. Catalyzes the ATP-dependent activation of (R)-beta-lysine produced by EpmB, forming a lysyl-adenylate, from which the beta-lysyl moiety is then transferred to the epsilon-amino group of EF-P 'Lys-34'. This is Elongation factor P--(R)-beta-lysine ligase from Salmonella typhi.